The following is a 1669-amino-acid chain: Polycomb group protein Asx (1669 aa).

The disordered stretch occupies residues isoleucine 90–proline 109. Positions proline 215 to serine 338 constitute a DEUBAD domain. 2 consecutive short sequence motifs (LXXLL motif) follow at residues leucine 224 to leucine 228 and leucine 244 to leucine 248. Residues asparagine 283–phenylalanine 285 carry the NEF motif motif. Residues lysine 336–asparagine 352 are compositionally biased toward basic and acidic residues. Disordered regions lie at residues lysine 336–threonine 378, serine 410–asparagine 478, phenylalanine 635–alanine 718, methionine 952–arginine 972, glutamine 1174–leucine 1193, proline 1398–leucine 1437, leucine 1482–serine 1505, and serine 1587–histidine 1610. 3 stretches are compositionally biased toward polar residues: residues alanine 367–threonine 378, phenylalanine 413–glutamate 425, and proline 434–threonine 450. The span at lysine 465–glutamate 474 shows a compositional bias: basic and acidic residues. Residues phenylalanine 635–asparagine 650 are compositionally biased toward low complexity. Basic and acidic residues predominate over residues lysine 651–aspartate 661. The segment covering isoleucine 666–alanine 718 has biased composition (low complexity). Composition is skewed to low complexity over residues glutamine 1174–glutamine 1192 and threonine 1404–glutamine 1436. Positions proline 1592–histidine 1610 are enriched in low complexity. Residues glutamine 1602–cysteine 1666 form a PHD-type; atypical zinc finger.

Belongs to the Asx family. In terms of assembly, component of the polycomb repressive deubiquitinase (PR-DUB) complex, at least composed of caly/calypso, Asx and sba (MBD5/6 homolog). Interacts (via DEUBAD domain) with caly/calypso (via ULD domain); the interaction produces a stable heterodimer with a composite binding site for ubiquitin. Two copies of the caly-Asx heterodimer assemble into a bidentate tetramer. Interacts (via PHD domain) with sba (probably via MBD domain); the interaction is important for the stability of the PR-DUB complex. Interacts with tant. Interacts with cyclin CycG. As to expression, highly expressed in nurse cells and deposited in oocytes late in oogenesis. Ubiquitous in early embryos. Late embryos show higher levels in CNS and neurectoderm.

It localises to the nucleus. Its subcellular location is the chromosome. Functionally, non-catalytic component of the polycomb repressive deubiquitinase (PR-DUB) complex, a complex that specifically mediates deubiquitination of histone H2A monoubiquitinated at 'Lys-119' (H2AK118ub1). Activator of the PR-DUB complex involved in ubiquitin binding and allosteric activation of calypso deubiquitinase activity. PR-DUB does not deubiquitinate monoubiquitinated histone H2B. PR-DUB is required to maintain the transcriptionally repressive state of homeotic genes throughout development. The PR-DUB complex has weak or no activity toward 'Lys-48'- and 'Lys-63'-linked polyubiquitin chains. Atypical Polycomb group protein, which may be involved in both Polycomb group (PcG) and trithorax group (trxG) complexes. PcG and trxG proteins act by forming multiprotein complexes, which are respectively required to maintain the transcriptionally repressive and transcriptionally active state of homeotic genes throughout development. PcG and trxG protein complexes are not required to initiate repression and activation, but to maintain it during later stages of development. This is Polycomb group protein Asx from Drosophila melanogaster (Fruit fly).